Consider the following 387-residue polypeptide: Trichocyst matrix protein T2-C (387 aa).

A signal peptide spans 1-19 (MKTIILALALIVLASSTQA). A propeptide spanning residues 20–48 (DVIATIKKIDQSPFGRTLFDTIWLELQTG) is cleaved from the precursor. Positions 51-163 (LDRLLQTLTD…KVLEHQEATA (113 aa)) form a coiled coil. Residues 184 to 239 (KGKATKQPAHKFTKEVASMIQKHFTTSAKKAAKFQHRKGYSKLFKAFATIASKVEQ) constitute a propeptide that is removed on maturation. Residues 294-333 (TALANAQSDLAALNDVIAQVEASLDTTNQRIENVSADRND) adopt a coiled-coil conformation.

The protein belongs to the TMP family. Two components are produced by post-translational processing from the precursor peptide.

Its subcellular location is the trichocyst. Its function is as follows. Structural protein that crystallize inside the trichocyst matrix. The polypeptide is Trichocyst matrix protein T2-C (T2C) (Paramecium tetraurelia).